Consider the following 571-residue polypeptide: Proline--tRNA ligase (571 aa).

This sequence belongs to the class-II aminoacyl-tRNA synthetase family. ProS type 1 subfamily. In terms of assembly, homodimer.

The protein localises to the cytoplasm. The catalysed reaction is tRNA(Pro) + L-proline + ATP = L-prolyl-tRNA(Pro) + AMP + diphosphate. Functionally, catalyzes the attachment of proline to tRNA(Pro) in a two-step reaction: proline is first activated by ATP to form Pro-AMP and then transferred to the acceptor end of tRNA(Pro). As ProRS can inadvertently accommodate and process non-cognate amino acids such as alanine and cysteine, to avoid such errors it has two additional distinct editing activities against alanine. One activity is designated as 'pretransfer' editing and involves the tRNA(Pro)-independent hydrolysis of activated Ala-AMP. The other activity is designated 'posttransfer' editing and involves deacylation of mischarged Ala-tRNA(Pro). The misacylated Cys-tRNA(Pro) is not edited by ProRS. In Pediococcus pentosaceus (strain ATCC 25745 / CCUG 21536 / LMG 10740 / 183-1w), this protein is Proline--tRNA ligase.